A 1749-amino-acid polypeptide reads, in one-letter code: MQAMDPAAADLYEEDGKDLDFYDFEPLPTLPEDEENVSLADILSLRDRGLSEQEAWAVCLECSLSMRSVAHAAIFQSLCITPDTLAFNTSGNVCFMEQLSDDPEGAFVPPEFDVTGNTFEAHIYSLGATLKAALEYVAEPTLEPRLSQDLEALLSRMQAEDPGDRPDLESIIALCEEKLQLTSSCRVCRSLSAVGRRVLSIESFGALQDVSESSWRERPAPGNAGPRRPPGDPSTDPEVLPTPEGPESETSRGPRASPTKALLSTPVRNGESHSREGLAGLVLDAERTLGELDRDALRRSRLRKVQTFPRLLSDSPEATLCLPLTRGKSQLPISELFSPDPRKAFLDRKNGLSSFQAQPKCRLWPEQEPEHQLGRVPCAGRSTDRGPGVPGSPGQPETSHPSQGPAEAPADPRDASGEAQTPRDDERIPEGARQLESAAAEQWVSLQDLLSQLGRPFREYELWALCLACLRALQTRPEHPAYLCLDSVLVAEDGAVLFQPPPANGSYDSFFLAPELAEERLVTEKASVYCVAAVLWTAAKFSVPRNHKLALPRRLKTLLLDMARRSAPERPSAAEAIKVCGSYLLQRGMDSRKILAHLRASICQVYQEEETISLQNAFSVVELKPSVAPAPEPSPGFLPVNSDTGLVAVPGPVPGQHPCGEEATQLPAAFTSEATHFKPIVLAQNASVARDQPALAQEESEERGGQREGEGEEKLSLEAHAGSPSLKTPDGPVPGPGPQGAAPEPLGASVQRDSAQGRPCPPPQAPANQPEGASSAAPGSPVPAPPTKASALPVEQGPAEPIPPGVASGGLRPDALGPTTAHHGPRHPPKPPRSKATERPGQEPEGPGATPAGERDDQSPDSVPERPRPADRRLCLPCVDASPLPGRTACPSLQEATRLIQEEFAFDGYLDNGLEALIMGEYIFALKDLTFATFCGAISEKFCDLYWDEKLLQNLFKVVNGQASPSPSTAEEAGSQLEGSQSPRSPSSKRPSLHRLGKEKPAMARTSSRAPCSPTSVSDVDSDALSRGNFEVGFRPQRSVKAERAQQPEAGEDRRPAGGASDVEAVTRLARSKGVGPALSPGPAGFQSCSPGWCSAFYEADCFGADVHNYVKDLGRQQADGALPDAQSPELEQQLMMEKRNYRKTLKFYQKLLQKEKRNKGSDVKTMLSKLKGQLEEMKSRVQFLSLVKKYLQVMYAERWGLEPCTLPVIVNIAAAPCDTLDFSPLDESSSLIFYNVNKHPGGRQKARILQAGTPLGLMAYLYSSDAFLEGYVQQFLYTFRYFCTPHDFLHFLLDRINSTLTRAHQDPTSTFTKIYRRSLCVLQAWVEDCYAVDFPRNSGLLGKLEDFISSKILPLDGSAKHLLGLLEVGMDRRAEGNPRGTDLENPREAEEDARPFNALCKRLSEDGISRKSFPWRLPRGNGLVLPPHKERPYTIAAALPKPCFLEDFYGPCAKTSEKGPYFLTEYSTHQLFSQLTLLQQELFQKCHPVHFLNSRALGVMDKSTAIPKASSSESLSAKTCSLFLPNYVQDKYLLQLLRNADDVSTWVAAEIVTSHTSKLQVNLLSKFLLIAKSCYEQRNFATAMQILSGLEHLAVRQSPAWRILPAKIAEVMEELKAVEVFLKSDSLCLMEGRRFRAQPTLPSAHLLAMHIQQLETGGFTMTNGAHRWSKLRNIAKVVSQVHAFQENPYTFSPDPKLQSYLKQRIARFSGADISTLAADSRANFHQVSSEKHSRKIQDKLRRMKATFQ.

Positions 37–217 (VSLADILSLR…QDVSESSWRE (181 aa)) constitute a KIND 1 domain. Disordered stretches follow at residues 210 to 275 (VSES…SHSR) and 361 to 435 (CRLW…ARQL). Composition is skewed to basic and acidic residues over residues 363 to 373 (LWPEQEPEHQL) and 410 to 430 (ADPR…RIPE). The 165-residue stretch at 444–608 (VSLQDLLSQL…RASICQVYQE (165 aa)) folds into the KIND 2 domain. 2 disordered regions span residues 689–871 (ARDQ…RPAD) and 962–1061 (QASP…GGAS). The segment covering 702–717 (ERGGQREGEGEEKLSL) has biased composition (basic and acidic residues). Low complexity-rich tracts occupy residues 739–748 (QGAAPEPLGA) and 766–779 (PANQ…AAPG). Positions 823–833 (HGPRHPPKPPR) are enriched in basic residues. Positions 853–871 (GERDDQSPDSVPERPRPAD) are enriched in basic and acidic residues. Ser964 is modified (phosphoserine). Residues 980–990 (SQSPRSPSSKR) are compositionally biased toward low complexity. The span at 1005 to 1019 (RTSSRAPCSPTSVSD) shows a compositional bias: polar residues. A compositionally biased stretch (basic and acidic residues) spans 1040–1056 (VKAERAQQPEAGEDRRP). A coiled-coil region spans residues 1133–1190 (QQLMMEKRNYRKTLKFYQKLLQKEKRNKGSDVKTMLSKLKGQLEEMKSRVQFLSLVKK). Positions 1246–1371 (KARILQAGTP…HLLGLLEVGM (126 aa)) constitute an N-terminal Ras-GEF domain. Residues 1468–1719 (STHQLFSQLT…SGADISTLAA (252 aa)) enclose the Ras-GEF domain.

Interacts (via KIND2) with MAP2; the interaction enhances MAP2 phosphorylation and localizes KNDC1 to dendrites. In terms of tissue distribution, expressed specifically in the cerebral cortex.

The protein localises to the cell projection. It localises to the dendrite. Its subcellular location is the perikaryon. Functionally, RAS-Guanine nucleotide exchange factor (GEF) that controls the negative regulation of neuronal dendrite growth by mediating a signaling pathway linking RAS and MAP2. May be involved in cellular senescence. The sequence is that of Kinase non-catalytic C-lobe domain-containing protein 1 from Homo sapiens (Human).